Consider the following 179-residue polypeptide: Large ribosomal subunit protein uL5 (179 aa).

The protein belongs to the universal ribosomal protein uL5 family. As to quaternary structure, part of the 50S ribosomal subunit; part of the 5S rRNA/L5/L18/L25 subcomplex. Contacts the 5S rRNA and the P site tRNA. Forms a bridge to the 30S subunit in the 70S ribosome.

This is one of the proteins that bind and probably mediate the attachment of the 5S RNA into the large ribosomal subunit, where it forms part of the central protuberance. In the 70S ribosome it contacts protein S13 of the 30S subunit (bridge B1b), connecting the 2 subunits; this bridge is implicated in subunit movement. Contacts the P site tRNA; the 5S rRNA and some of its associated proteins might help stabilize positioning of ribosome-bound tRNAs. The protein is Large ribosomal subunit protein uL5 of Geobacter sp. (strain M21).